A 409-amino-acid polypeptide reads, in one-letter code: 1-deoxy-D-xylulose 5-phosphate reductoisomerase (409 aa).

NADPH contacts are provided by Thr5, Gly6, Ser7, Ile8, Gly31, Asn33, and Asn122. Position 123 (Lys123) interacts with 1-deoxy-D-xylulose 5-phosphate. Glu124 contributes to the NADPH binding site. Asp148 provides a ligand contact to Mn(2+). 1-deoxy-D-xylulose 5-phosphate is bound by residues Ser149, Glu150, Ser186, and His209. Residue Glu150 participates in Mn(2+) binding. NADPH is bound at residue Gly215. 1-deoxy-D-xylulose 5-phosphate contacts are provided by Ser222, Asn227, Lys228, and Glu231. Glu231 contacts Mn(2+).

The protein belongs to the DXR family. Mg(2+) is required as a cofactor. Mn(2+) serves as cofactor.

The enzyme catalyses 2-C-methyl-D-erythritol 4-phosphate + NADP(+) = 1-deoxy-D-xylulose 5-phosphate + NADPH + H(+). It functions in the pathway isoprenoid biosynthesis; isopentenyl diphosphate biosynthesis via DXP pathway; isopentenyl diphosphate from 1-deoxy-D-xylulose 5-phosphate: step 1/6. In terms of biological role, catalyzes the NADPH-dependent rearrangement and reduction of 1-deoxy-D-xylulose-5-phosphate (DXP) to 2-C-methyl-D-erythritol 4-phosphate (MEP). The sequence is that of 1-deoxy-D-xylulose 5-phosphate reductoisomerase from Parasynechococcus marenigrum (strain WH8102).